Reading from the N-terminus, the 96-residue chain is MAKSGYNASFLLLISMFLILLTFSNVVEGYNKLRPTDCKPRCTYRCSATSHKKPCMFFCQKCCATCLCVPKGVYGNKQSCPCYNNWKTQEGKPKCP.

Residues 1–29 (MAKSGYNASFLLLISMFLILLTFSNVVEG) form the signal peptide.

This sequence belongs to the GASA family. Post-translationally, six disulfide bonds may be present. Expressed very early in lateral root development.

It is found in the secreted. This is Protein RSI-1 (RSI-1) from Solanum lycopersicum (Tomato).